The following is a 485-amino-acid chain: Glycogen synthase (485 aa).

Position 15 (Lys-15) interacts with ADP-alpha-D-glucose.

This sequence belongs to the glycosyltransferase 1 family. Bacterial/plant glycogen synthase subfamily.

It catalyses the reaction [(1-&gt;4)-alpha-D-glucosyl](n) + ADP-alpha-D-glucose = [(1-&gt;4)-alpha-D-glucosyl](n+1) + ADP + H(+). It functions in the pathway glycan biosynthesis; glycogen biosynthesis. Synthesizes alpha-1,4-glucan chains using ADP-glucose. This Thermosipho africanus (strain TCF52B) protein is Glycogen synthase.